Consider the following 1238-residue polypeptide: ATP-dependent helicase/nuclease subunit A (1238 aa).

Positions 6–474 constitute a UvrD-like helicase ATP-binding domain; sequence TKWTETQKSA…IKLSENFRSR (469 aa). An ATP-binding site is contributed by 27–34; the sequence is AGAGTGKT. The UvrD-like helicase C-terminal domain occupies 512–811; sequence PFEGNCGGDV…RIMSIHKSKG (300 aa).

Belongs to the helicase family. AddA subfamily. As to quaternary structure, heterodimer of AddA and AddB/RexB. The cofactor is Mg(2+).

It catalyses the reaction Couples ATP hydrolysis with the unwinding of duplex DNA by translocating in the 3'-5' direction.. The enzyme catalyses ATP + H2O = ADP + phosphate + H(+). Functionally, the heterodimer acts as both an ATP-dependent DNA helicase and an ATP-dependent, dual-direction single-stranded exonuclease. Recognizes the chi site generating a DNA molecule suitable for the initiation of homologous recombination. The AddA nuclease domain is required for chi fragment generation; this subunit has the helicase and 3' -&gt; 5' nuclease activities. The protein is ATP-dependent helicase/nuclease subunit A of Clostridium kluyveri (strain NBRC 12016).